The primary structure comprises 466 residues: Cysteine--tRNA ligase (466 aa).

Cys-28 provides a ligand contact to Zn(2+). The 'HIGH' region signature appears at 30–40 (PTVYNYIHIGN). The Zn(2+) site is built by Cys-208, His-233, and Glu-237. Residues 265 to 269 (KMSKS) carry the 'KMSKS' region motif. Residue Lys-268 coordinates ATP.

Belongs to the class-I aminoacyl-tRNA synthetase family. Monomer. It depends on Zn(2+) as a cofactor.

It is found in the cytoplasm. The enzyme catalyses tRNA(Cys) + L-cysteine + ATP = L-cysteinyl-tRNA(Cys) + AMP + diphosphate. This chain is Cysteine--tRNA ligase, found in Staphylococcus aureus (strain Mu3 / ATCC 700698).